We begin with the raw amino-acid sequence, 632 residues long: X-ray repair cross-complementing protein 5 (632 aa).

The active-site Schiff-base intermediate with DNA; for 5'-deoxyribose-5-phosphate lyase activity is the R52. Positions 283 to 490 (LYLNKDLSFS…VDKMKGIIQK (208 aa)) constitute a Ku domain. A disordered region spans residues 555-578 (DYSPEGKAAKRKQAGDAQAEKRPK). The SAP domain occupies 595–629 (LGKLTVSALKDTCRHYGLRSGGKKQELIDALTEYF).

Belongs to the ku70 family. In terms of assembly, heterodimer composed of XRCC5/Ku80 and XRCC6/Ku70. Component of the core long-range non-homologous end joining (NHEJ) complex (also named DNA-PK complex) composed of PRKDC, LIG4, XRCC4, XRCC6/Ku70, XRCC5/Ku86 and NHEJ1/XLF. Additional component of the NHEJ complex includes PAXX. Following autophosphorylation, PRKDC dissociates from DNA, leading to formation of the short-range NHEJ complex, composed of LIG4, XRCC4, XRCC6/Ku70, XRCC5/Ku86 and NHEJ1/XLF. Post-translationally, phosphorylated on serine residues.

It is found in the nucleus. The protein resides in the chromosome. Functionally, single-stranded DNA-dependent ATP-dependent helicase that plays a key role in DNA non-homologous end joining (NHEJ) by recruiting DNA-PK to DNA. Required for double-strand break repair and V(D)J recombination. Also has a role in chromosome translocation. Has a role in chromosome translocation. The DNA helicase II complex binds preferentially to fork-like ends of double-stranded DNA in a cell cycle-dependent manner. It works in the 3'-5' direction. During NHEJ, the XRCC5-XRRC6 dimer performs the recognition step: it recognizes and binds to the broken ends of the DNA and protects them from further resection. Binding to DNA may be mediated by XRCC6. The XRCC5-XRRC6 dimer acts as a regulatory subunit of the DNA-dependent protein kinase complex DNA-PK by increasing the affinity of the catalytic subunit PRKDC to DNA by 100-fold. The XRCC5-XRRC6 dimer is probably involved in stabilizing broken DNA ends and bringing them together. The assembly of the DNA-PK complex to DNA ends is required for the NHEJ ligation step. Probably also acts as a 5'-deoxyribose-5-phosphate lyase (5'-dRP lyase), by catalyzing the beta-elimination of the 5' deoxyribose-5-phosphate at an abasic site near double-strand breaks. 5'-dRP lyase activity allows to 'clean' the termini of abasic sites, a class of nucleotide damage commonly associated with strand breaks, before such broken ends can be joined. The XRCC5-XRRC6 dimer together with APEX1 acts as a negative regulator of transcription. The polypeptide is X-ray repair cross-complementing protein 5 (XRCC6) (Gallus gallus (Chicken)).